Reading from the N-terminus, the 456-residue chain is Sulfoacetaldehyde dehydrogenase (456 aa).

213–218 (GGTAAA) is a binding site for NAD(+). Active-site residues include E233 and C267.

The protein belongs to the aldehyde dehydrogenase family. Homotetramer.

The enzyme catalyses sulfoacetaldehyde + NAD(+) + H2O = sulfoacetate + NADH + 2 H(+). Functionally, mediates conversion of 2-sulfoacetaldehyde into sulfoacetate. The enzyme is specific for NAD; NADP is not a substrate. Part of a pathway that can utilize the amino group of taurine as a sole source of nitrogen for growth. The sequence is that of Sulfoacetaldehyde dehydrogenase (safD) from Neptuniibacter caesariensis.